The chain runs to 315 residues: Probable mannose-6-phosphate isomerase GmuF (315 aa).

Zn(2+) is bound by residues Q95, H97, E115, and H172. Residue R192 is part of the active site.

This sequence belongs to the mannose-6-phosphate isomerase type 1 family. Zn(2+) serves as cofactor.

The enzyme catalyses D-mannose 6-phosphate = D-fructose 6-phosphate. Functionally, seems to be involved in the degradation of glucomannan. The polypeptide is Probable mannose-6-phosphate isomerase GmuF (gmuF) (Bacillus subtilis (strain 168)).